The following is a 257-amino-acid chain: 7-carboxy-7-deazaguanine synthase (257 aa).

The tract at residues 1-25 (MKSVDHPVDVLPAEHSAETPGDARA) is disordered. Substrate-binding positions include 39–41 (RQG) and R54. In terms of domain architecture, Radical SAM core spans 45–244 (LTGTESVFIR…AISRGYQYCD (200 aa)). [4Fe-4S] cluster-binding residues include C58, C62, and C65. Residue T67 coordinates Mg(2+). T99 contributes to the substrate binding site. Residues G101 and 143 to 145 (SPK) each bind S-adenosyl-L-methionine.

It belongs to the radical SAM superfamily. 7-carboxy-7-deazaguanine synthase family. As to quaternary structure, homodimer. [4Fe-4S] cluster serves as cofactor. It depends on S-adenosyl-L-methionine as a cofactor. Mg(2+) is required as a cofactor.

The catalysed reaction is 6-carboxy-5,6,7,8-tetrahydropterin + H(+) = 7-carboxy-7-deazaguanine + NH4(+). Its pathway is purine metabolism; 7-cyano-7-deazaguanine biosynthesis. Its function is as follows. Catalyzes the complex heterocyclic radical-mediated conversion of 6-carboxy-5,6,7,8-tetrahydropterin (CPH4) to 7-carboxy-7-deazaguanine (CDG), a step common to the biosynthetic pathways of all 7-deazapurine-containing compounds. This Rhodopirellula baltica (strain DSM 10527 / NCIMB 13988 / SH1) protein is 7-carboxy-7-deazaguanine synthase.